Consider the following 294-residue polypeptide: 4-hydroxy-tetrahydrodipicolinate synthase (294 aa).

Position 45 (threonine 45) interacts with pyruvate. Catalysis depends on tyrosine 133, which acts as the Proton donor/acceptor. Residue lysine 161 is the Schiff-base intermediate with substrate of the active site. Isoleucine 203 lines the pyruvate pocket.

Belongs to the DapA family. In terms of assembly, homotetramer; dimer of dimers.

The protein localises to the cytoplasm. The enzyme catalyses L-aspartate 4-semialdehyde + pyruvate = (2S,4S)-4-hydroxy-2,3,4,5-tetrahydrodipicolinate + H2O + H(+). Its pathway is amino-acid biosynthesis; L-lysine biosynthesis via DAP pathway; (S)-tetrahydrodipicolinate from L-aspartate: step 3/4. Functionally, catalyzes the condensation of (S)-aspartate-beta-semialdehyde [(S)-ASA] and pyruvate to 4-hydroxy-tetrahydrodipicolinate (HTPA). In Shewanella sp. (strain W3-18-1), this protein is 4-hydroxy-tetrahydrodipicolinate synthase.